The chain runs to 216 residues: Uracil phosphoribosyltransferase (216 aa).

GTP is bound at residue 30 to 34; that stretch reads KNLVR. 5-phospho-alpha-D-ribose 1-diphosphate contacts are provided by residues Arg-80, Arg-105, and 140–148; that span reads DPMIATAST. Residues Ile-203 and 208–210 each bind uracil; that span reads GDA. Asp-209 contacts 5-phospho-alpha-D-ribose 1-diphosphate.

Belongs to the UPRTase family. The cofactor is Mg(2+).

It carries out the reaction UMP + diphosphate = 5-phospho-alpha-D-ribose 1-diphosphate + uracil. Its pathway is pyrimidine metabolism; UMP biosynthesis via salvage pathway; UMP from uracil: step 1/1. With respect to regulation, allosterically activated by GTP. Functionally, catalyzes the conversion of uracil and 5-phospho-alpha-D-ribose 1-diphosphate (PRPP) to UMP and diphosphate. This is Uracil phosphoribosyltransferase from Saccharolobus islandicus (strain Y.N.15.51 / Yellowstone #2) (Sulfolobus islandicus).